We begin with the raw amino-acid sequence, 283 residues long: Probable endonuclease 4 (283 aa).

Zn(2+) contacts are provided by histidine 69, histidine 109, glutamate 144, aspartate 178, histidine 181, histidine 215, aspartate 228, histidine 230, and glutamate 260.

It belongs to the AP endonuclease 2 family. Zn(2+) serves as cofactor.

The enzyme catalyses Endonucleolytic cleavage to 5'-phosphooligonucleotide end-products.. In terms of biological role, endonuclease IV plays a role in DNA repair. It cleaves phosphodiester bonds at apurinic or apyrimidinic (AP) sites, generating a 3'-hydroxyl group and a 5'-terminal sugar phosphate. This is Probable endonuclease 4 from Thermosipho melanesiensis (strain DSM 12029 / CIP 104789 / BI429).